A 441-amino-acid chain; its full sequence is Zinc finger and BTB domain-containing protein 8A (441 aa).

The BTB domain maps to 24–92 (CDCSILVEGK…VYSGKLSLTG (69 aa)). Composition is skewed to polar residues over residues 146 to 170 (ERSSFYSSGWQDESSSPRSHLSPDQ) and 178 to 197 (KSWSKYNYHPASQRNTQQPL). Residues 146–252 (ERSSFYSSGW…SEEQAQMNAE (107 aa)) are disordered. Residues Ser161 and Ser167 each carry the phosphoserine modification. Glycyl lysine isopeptide (Lys-Gly) (interchain with G-Cter in SUMO2) cross-links involve residues Lys178, Lys182, and Lys199. Positions 198–208 (TKHEQRKDSIK) are enriched in basic and acidic residues. A compositionally biased stretch (low complexity) spans 234 to 248 (SDSSSHASQSEEQAQ). C2H2-type zinc fingers lie at residues 282 to 304 (FKCPYCTHVVKRKADLKRHLRCH) and 310 to 333 (YPCQACGKRFSRLDHLSSHFRTIH). Lys437 is covalently cross-linked (Glycyl lysine isopeptide (Lys-Gly) (interchain with G-Cter in SUMO2)).

The protein resides in the nucleus. In terms of biological role, may be involved in transcriptional regulation. This is Zinc finger and BTB domain-containing protein 8A (ZBTB8A) from Bos taurus (Bovine).